The sequence spans 1286 residues: ABC transporter B family member 4 (1286 aa).

The tract at residues 1 to 39 (MASESGLNGDPNILEEVSETKRDKEEEEEVKKTEKKDEE) is disordered. A compositionally biased stretch (basic and acidic residues) spans 18 to 39 (SETKRDKEEEEEVKKTEKKDEE). The chain crosses the membrane as a helical span at residues 60-80 (FLLMILGTLGSIGNGLGFPLM). Positions 63-349 (MILGTLGSIG…TSPCLSAFAA (287 aa)) constitute an ABC transmembrane type-1 1 domain. Asn94 and Asn97 each carry an N-linked (GlcNAc...) asparagine glycan. Transmembrane regions (helical) follow at residues 109–129 (FVWLGIGTFAAAFLQLSGWMI), 186–206 (IQLLATFVGGFVIAFVRGWLL), 208–228 (LVMLSSIPLLVMAGALLAIVI), 288–308 (GLGLGTLFLVVFCSYALAVWY), and 317–337 (GYTGGQVLNIIIAVLTGSMSL). The 237-residue stretch at 384 to 620 (IELKDVYFTY…PEGAYSQLIR (237 aa)) folds into the ABC transporter 1 domain. Residue 419 to 426 (GQSGSGKS) coordinates ATP. N-linked (GlcNAc...) asparagine glycosylation is found at Asn500 and Asn571. Positions 625–636 (KKSDENAAEEQK) are enriched in basic and acidic residues. The tract at residues 625–669 (KKSDENAAEEQKMSSIESFKQSSLRKSSLGRSLSKGGSSRGNSSR) is disordered. The span at 646 to 669 (SSLRKSSLGRSLSKGGSSRGNSSR) shows a compositional bias: low complexity. A glycan (N-linked (GlcNAc...) asparagine) is linked at Asn666. Ser671 bears the Phosphoserine mark. The ABC transmembrane type-1 2 domain maps to 720-1007 (LILGSISAAA…SSSLSPDSSK (288 aa)). 2 helical membrane passes run 721 to 741 (ILGSISAAANGVILPIFGILI) and 764 to 784 (IIFMVLGFASIIAYPAQTFFF). Asn816 and Asn846 each carry an N-linked (GlcNAc...) asparagine glycan. Helical transmembrane passes span 850–870 (ILAGLIIAFLACWQLAFVVLA), 871–891 (MLPLIALNGFLYMKFMKGFSA), 942–962 (GIVSGIGFGFSFFVLFSSYAA), and 976–996 (TTFDSVFRVFFALTMAAMAIS). In terms of domain architecture, ABC transporter 2 spans 1042–1279 (IELRHVSFKY…KDGVYASLVQ (238 aa)). 1077–1084 (GESGSGKS) contributes to the ATP binding site. N-linked (GlcNAc...) asparagine glycosylation is found at Asn1131 and Asn1230.

Belongs to the ABC transporter superfamily. ABCB family. Multidrug resistance exporter (TC 3.A.1.201) subfamily. Interacts with 1-naphthylphthalamic acid (NPA). In terms of processing, phosphorylation level varies significantly during early response to bacterial elicitor. In terms of tissue distribution, mostly expressed in roots, especially in the root elongation zone and lateral roots. In mature portion of the root, expressed in the epidermis and cortex. In the root elongation zone, confined to epidermis. In root tips, present in the root cap, S3 columella and epidermal cells.

The protein resides in the cell membrane. Auxin influx transporter that mediates the transport of auxin in roots. Contributes to the basipetal transport in hypocotyls and root tips by establishing an auxin uptake sink in the root cap. Confers sensitivity to 1-N-naphthylphthalamic acid (NPA). Regulates the root elongation, the initiation of lateral roots and the development of root hairs. Can transport IAA, indole-3-propionic acid, NPA syringic acid, vanillic acid and some auxin metabolites, but not 2,4-D and 1-naphthaleneacetic acid. The sequence is that of ABC transporter B family member 4 (ABCB4) from Arabidopsis thaliana (Mouse-ear cress).